A 417-amino-acid chain; its full sequence is MDKLVIEGGVPLTGSIEVSGSKNAALPILFAAILPEEPVTITNVPDLRDIHTTLNLLKVLGCDCQYENGQVRIVPGSLLPEAPYDLVRTMRASVLCLGPLLARIGQARVALPGGCAIGARPVDQHLKGLEQMGASFQLEEGYIIGRCRKLTGAHITFDMPTVGGTENLLMAAVLAEGKTVLENVALEPEVVDLANFLCACGARISGQGTSCIRIEGVTSLHQATYPVMPDRIEAGTFLAAAGITGGELLLHNCPYDELESVILKLRSMGMEITQQGSGVLARCCAAPLRGTDVKTQPYPGFPTDMQAQIMALMCLAQGASVVEESIFENRFMHVLELMRMGAQIKVSGHTAMVRGVQKLTGAPVMASDLRASASLVLAGLAAQGVTEVRRIYHLDRGYEHIEHKLNAVGARIRREKQ.

22-23 (KN) provides a ligand contact to phosphoenolpyruvate. Arginine 91 is a UDP-N-acetyl-alpha-D-glucosamine binding site. Cysteine 115 serves as the catalytic Proton donor. Position 115 is a 2-(S-cysteinyl)pyruvic acid O-phosphothioketal (cysteine 115). UDP-N-acetyl-alpha-D-glucosamine contacts are provided by residues 120–124 (RPVDQ), aspartate 304, and isoleucine 326.

Belongs to the EPSP synthase family. MurA subfamily.

Its subcellular location is the cytoplasm. The enzyme catalyses phosphoenolpyruvate + UDP-N-acetyl-alpha-D-glucosamine = UDP-N-acetyl-3-O-(1-carboxyvinyl)-alpha-D-glucosamine + phosphate. It participates in cell wall biogenesis; peptidoglycan biosynthesis. Its function is as follows. Cell wall formation. Adds enolpyruvyl to UDP-N-acetylglucosamine. This chain is UDP-N-acetylglucosamine 1-carboxyvinyltransferase, found in Desulfovibrio desulfuricans (strain ATCC 27774 / DSM 6949 / MB).